We begin with the raw amino-acid sequence, 140 residues long: Nucleoside diphosphate kinase (140 aa).

6 residues coordinate ATP: Lys11, Phe59, Arg87, Thr93, Arg104, and Asn114. His117 functions as the Pros-phosphohistidine intermediate in the catalytic mechanism.

Belongs to the NDK family. In terms of assembly, homotetramer. Requires Mg(2+) as cofactor.

It localises to the cytoplasm. The catalysed reaction is a 2'-deoxyribonucleoside 5'-diphosphate + ATP = a 2'-deoxyribonucleoside 5'-triphosphate + ADP. It carries out the reaction a ribonucleoside 5'-diphosphate + ATP = a ribonucleoside 5'-triphosphate + ADP. Its function is as follows. Major role in the synthesis of nucleoside triphosphates other than ATP. The ATP gamma phosphate is transferred to the NDP beta phosphate via a ping-pong mechanism, using a phosphorylated active-site intermediate. The chain is Nucleoside diphosphate kinase from Chelativorans sp. (strain BNC1).